A 398-amino-acid chain; its full sequence is Stomatin-like protein 1 (398 aa).

A Tyrosine-type lysosomal sorting signal motif is present at residues 6 to 10 (GYRAL). At Ser-28 the chain carries Phosphoserine. A helical; Signal-anchor for type III membrane protein membrane pass occupies residues 58-78 (LISFLGFLLLLVTFPISGWFA). The Cytoplasmic portion of the chain corresponds to 79–398 (LKIVPTYERM…KLEAVLRALK (320 aa)). The 112-residue stretch at 287–398 (KQPLAEGLLT…KLEAVLRALK (112 aa)) folds into the SCP2 domain.

This sequence belongs to the band 7/mec-2 family. In terms of assembly, interacts with STOM; may redistribute STOM from the plasma membrane to late endosomes. Interacts with FBXW7 isoform 3 and CDK2. Ubiquitously expressed at low levels. Expression is highest in brain.

It is found in the membrane. It localises to the late endosome membrane. The protein localises to the membrane raft. Its subcellular location is the cell membrane. The protein resides in the cytoplasmic vesicle. Its function is as follows. May play a role in cholesterol transfer to late endosomes. May play a role in modulating membrane acid-sensing ion channels. Can specifically inhibit proton-gated current of ASIC1 isoform 1. Can increase inactivation speed of ASIC3. May be involved in regulation of proton sensing in dorsal root ganglions. May play a role in protecting FBXW7 isoform 3 from degradation. This Homo sapiens (Human) protein is Stomatin-like protein 1 (STOML1).